The following is a 1125-amino-acid chain: Protein efr-3 (1125 aa).

Disordered regions lie at residues 240–261 (RTSNATAQPSETTGGEPGPNPI), 471–493 (RPSRPTSPPNSSPNGERSDNGAA), 788–819 (TSPPTSPTTSPGRNFTHPMLGSTLSATPKDET), and 845–1093 (QAGS…LGEK). A compositionally biased stretch (polar residues) spans 242-252 (SNATAQPSETT). Positions 788-798 (TSPPTSPTTSP) are enriched in low complexity. Residues 845 to 854 (QAGSSQTASL) are compositionally biased toward polar residues. Over residues 855 to 877 (NGTNGTHRNTVNNNNRLGVNGVT) the composition is skewed to low complexity. Polar residues-rich tracts occupy residues 878–896 (SPNGSNSNLRPSSSPTGPN), 975–1011 (LSFNPAASGSRQGSPGNTSQAASSPPRRTSQDRTQQL), and 1046–1071 (SRTTSRTQPQATTAHTTLPRPSTSSK).

This sequence belongs to the EFR3 family.

In Neurospora crassa (strain ATCC 24698 / 74-OR23-1A / CBS 708.71 / DSM 1257 / FGSC 987), this protein is Protein efr-3 (efr-3).